The following is a 473-amino-acid chain: MKILYSLRRFYHVETLFNGTFVLAGRDQETTGFAWWAGNARLINLSGKLLGAHVAHAGLIVFWAGAMNLFEVAHFVPEKPMYEQGLILLPHLATLGWGVGPGGEVLDTFPYFVSGVLHLISSAVLGFGGIYHALLGPETLEESFPFFGYVWKDRNKMTTILGIHLILLGLGAFLLVLKALYFGGVYDTWAPGGGDVRKITNLTLSPGVIFGYLLKSPFGGEGWIVSVDDLEDIIGGHVWLGSICVLGGIWHILTKPFAWARRAFVWSGEAYLSYSLAALSVFGFIACCFVWFNNTAYPSEFYGPTGPEASQAQAFTFLVRDQRLGANVGSAQGPTGLGKYLMRSPTGEVIFGGETMRFWDLRAPWLEPLRGPNGLDLSRLKKDIQPWQERRSAEYMTHAPLGSLNSVGGVATEINAVNYVSPRSWLATSHFVLGFFFFVGHLWHAGRARAAAAGFEKGIDRDLEPVLYMTPLN.

A propeptide spanning residues Met1–Glu14 is cleaved from the precursor. Residue Thr15 is modified to N-acetylthreonine. The residue at position 15 (Thr15) is a Phosphothreonine. 5 helical membrane passes run Leu69–Ala93, Leu134–Asn155, Lys178–Thr200, Lys255–Ser275, and Trp291–Ala312. Residue Glu367 participates in [CaMn4O5] cluster binding. Residues Arg447–Pro471 form a helical membrane-spanning segment.

It belongs to the PsbB/PsbC family. PsbC subfamily. As to quaternary structure, PSII is composed of 1 copy each of membrane proteins PsbA, PsbB, PsbC, PsbD, PsbE, PsbF, PsbH, PsbI, PsbJ, PsbK, PsbL, PsbM, PsbT, PsbX, PsbY, PsbZ, Psb30/Ycf12, at least 3 peripheral proteins of the oxygen-evolving complex and a large number of cofactors. It forms dimeric complexes. The cofactor is Binds multiple chlorophylls and provides some of the ligands for the Ca-4Mn-5O cluster of the oxygen-evolving complex. It may also provide a ligand for a Cl- that is required for oxygen evolution. PSII binds additional chlorophylls, carotenoids and specific lipids..

The protein resides in the plastid. It localises to the chloroplast thylakoid membrane. In terms of biological role, one of the components of the core complex of photosystem II (PSII). It binds chlorophyll and helps catalyze the primary light-induced photochemical processes of PSII. PSII is a light-driven water:plastoquinone oxidoreductase, using light energy to abstract electrons from H(2)O, generating O(2) and a proton gradient subsequently used for ATP formation. The protein is Photosystem II CP43 reaction center protein of Saccharum hybrid (Sugarcane).